We begin with the raw amino-acid sequence, 234 residues long: Large ribosomal subunit protein eL6 (234 aa).

Belongs to the eukaryotic ribosomal protein eL6 family.

The sequence is that of Large ribosomal subunit protein eL6 (RPL6) from Mesembryanthemum crystallinum (Common ice plant).